Here is a 1094-residue protein sequence, read N- to C-terminus: Protein transport protein Sec24C (1094 aa).

The tract at residues 1 to 338 (MNVNQSVPPV…PIQVIEDDRN (338 aa)) is disordered. Over residues 8 to 19 (PPVPPFGQPQPI) the composition is skewed to pro residues. 2 stretches are compositionally biased toward low complexity: residues 20 to 29 (YPGYHQSSYG) and 60 to 77 (SRAP…AQAP). A compositionally biased stretch (polar residues) spans 90–101 (DVQNGPSSTVQM). Residues 123–132 (VLQPYGPPPT) are compositionally biased toward pro residues. Composition is skewed to polar residues over residues 133–144 (SAQVATQLSGMQ), 165–175 (SLASASGSFPN), 189–215 (PLSQ…SFTP), and 240–251 (SVSQPNHVSSPP). Phosphothreonine is present on Thr214. Residues 273–282 (PQQPGYQPQQ) are compositionally biased toward low complexity. Zn(2+) is bound by residues Cys425, Cys428, Cys447, and Cys450. A zinc finger-like region spans residues 425–450 (CNRCKAYMCPFMQFIEGGRRFQCCFC). Residues 962–1034 (TTEPPAVRAS…DNPLSKKVRG (73 aa)) form a Gelsolin-like repeat.

This sequence belongs to the SEC23/SEC24 family. SEC24 subfamily. COPII is composed of at least five proteins: the Sec23/24 complex, the Sec13/31 complex and Sar1. Interacts with TMED2 and TMED10. Interacts with GOSR2 (via IxM motif) and STX5 (via IxM motif); recruits GOSR2 and STX5 into COPII-coated vesicles. Interacts with DDHD1. Interacts with STING1; promoting STING1 translocation to the COPII vesicles. As to expression, ubiquitous.

The protein localises to the cytoplasmic vesicle. Its subcellular location is the COPII-coated vesicle membrane. It localises to the endoplasmic reticulum membrane. It is found in the cytoplasm. The protein resides in the cytosol. In terms of biological role, component of the coat protein complex II (COPII) which promotes the formation of transport vesicles from the endoplasmic reticulum (ER). The coat has two main functions, the physical deformation of the endoplasmic reticulum membrane into vesicles and the selection of cargo molecules for their transport to the Golgi complex. Plays a central role in cargo selection within the COPII complex and together with SEC24D may have a different specificity compared to SEC24A and SEC24B. May more specifically package GPI-anchored proteins through the cargo receptor TMED10. May also be specific for IxM motif-containing cargos like the SNAREs GOSR2 and STX5. The chain is Protein transport protein Sec24C from Homo sapiens (Human).